Here is an 814-residue protein sequence, read N- to C-terminus: MSRPESRSGNASTPQGTSVLKADDGGSGQTPGGSTENSVAYRYVAVQQMTSCRDHIEYQLTVREQPKQSRMCGVGEKADRRPIDPAPIVQLRVVTHDRPIRQSDPVGSASVAPPVERRPGQGAAAPQTPGVRRGLPVTTALGDGWEDKAWYLENPYYFMYAMLCNADTDEELHLLNDGKTRYTSGSCVSCLYHLKDIDGSHQGFFVFPDLSIRVEGRYRLKLCLFETIGHSVHHCKSIYSDPFHVYTAKRFPGMEESTRLSKSFAEQGLKVRVRKHPRSRRRGSKRTKDESDASDETPLARHVSPKRARASDVLPMSGLPMSQPIASSRMPRSMDDRFERADYDRTPSMASAYYDVKGAPPSRHAPWEEEEVLRLRESRAWDPMYDAPSALYSHHAREDRVEDRRLPPRDFADGRYMDGDYPPHTRSAAAPLSSMSARAGPSEYSEHVRSVYLRDDPVRSMHGSPHRLSAALPPLPPPLSKTPSHPALVGRGYPESSASLTPAYSRNYPSVPAPAPAPAPMPMRPAPLLSRSYDHIGQQSSGRIYDDYGPRPNVVAHYSGSYDPRDALARGFSPPSPQPGRRSPYASHHPPTQWRSGPPSPSRPSDYHLGRASAVERGYAAARRSPIPSARGIDTPPEAYAGFESNPFPRRSFGVPDAGRPAATYDAPRAPPADLYAPDEGPPSGRLGGIGFAPSSRERLILPPLPVPSPLSAHRGELTPLGTRDRDREAAYIAMPRDRDQGLAPTERYLSPSGYNPRAGELDQRDREWEWECERERERERERKRGPASPEYRRDFAQATMPSKPSSRGHNQPY.

Disordered regions lie at residues Met-1–Glu-36, His-96–Gly-134, Gln-267–Ser-333, Pro-407–Pro-441, Pro-457–Thr-501, and Gln-539–Tyr-814. Residues Arg-7–Ser-18 show a composition bias toward polar residues. In terms of domain architecture, Velvet spans Arg-53 to Arg-274. Over residues Val-271 to Lys-285 the composition is skewed to basic residues. Positions Pro-407–Pro-423 are enriched in basic and acidic residues. Residues Arg-438–Ser-445 carry the Nuclear localization signal motif. Low complexity predominate over residues Ala-620–Arg-631. Composition is skewed to basic and acidic residues over residues Thr-723–Gln-741 and Gly-760–Phe-796. Residues Thr-800 to Tyr-814 show a composition bias toward polar residues.

It belongs to the velvet family. VosA subfamily. As to quaternary structure, forms a heterodimeric complex with velB; the formation of the VEL2-VOS1 complex is light-dependent.

It localises to the nucleus. Its function is as follows. Component of the velB-VosA heterodimeric complex that plays a dual role in activating genes associated with spore maturation and repressing certain development-associated genes. The complex binds DNA through the DNA-binding domain of vosA that recognizes an 11-nucleotide consensus sequence 5'-CTGGCCGCGGC-3' consisting of two motifs in the promoters of key developmental regulatory genes. Required for gall induction and teliospore formation on seedlings. This chain is Spore development regulator umv1, found in Mycosarcoma maydis (Corn smut fungus).